A 332-amino-acid chain; its full sequence is Malate dehydrogenase, cytoplasmic (332 aa).

Residues 16–17 (QI), D43, and G90 contribute to the NAD(+) site. Residue R99 participates in oxaloacetate binding. Positions 113 and 132 each coordinate NAD(+). Oxaloacetate contacts are provided by N132, R163, H188, and S243. H188 functions as the Proton acceptor in the catalytic mechanism.

The protein belongs to the LDH/MDH superfamily. MDH type 2 family. As to quaternary structure, monomer. As to expression, expressed constitutively in roots.

It is found in the cell membrane. It carries out the reaction (S)-malate + NAD(+) = oxaloacetate + NADH + H(+). In terms of biological role, malate dehydrogenase; catalyzes a reversible NAD-dependent dehydrogenase reaction involved in central metabolism and redox homeostasis. In Zea mays (Maize), this protein is Malate dehydrogenase, cytoplasmic.